The sequence spans 758 residues: Ribosomal RNA processing protein 1 homolog B (758 aa).

Ser245 bears the Phosphoserine mark. Over residues 259–272 (AVSKKKTALGKNHS) the composition is skewed to basic residues. The tract at residues 259–285 (AVSKKKTALGKNHSRKDGLSDERGRDD) is disordered. A compositionally biased stretch (basic and acidic residues) spans 273-285 (RKDGLSDERGRDD). Phosphoserine occurs at positions 350, 392, 394, and 395. The disordered stretch occupies residues 381–598 (GSRVFCVEEE…KTASLKKRKK (218 aa)). Positions 397 to 408 (QKRRRKKKKKHH) are enriched in basic residues. Over residues 447–457 (GAEATSSTGEE) the composition is skewed to low complexity. A phosphoserine mark is found at Ser452 and Ser458. Residues 469–481 (HNKRKRPRKKSPR) show a composition bias toward basic residues. Residues 498 to 513 (SQSGPSGSHPQGPRGS) show a composition bias toward low complexity. Ser513 is modified (phosphoserine). Over residues 566–575 (QRRRLQKKKA) the composition is skewed to basic residues. Phosphoserine is present on Ser579. The residue at position 652 (Lys652) is an N6-acetyllysine. A disordered region spans residues 660–681 (KSSTATHPPGPAVQLNKTPSSS). Phosphoserine is present on residues Ser702 and Ser706. Positions 707–758 (PTGPSRVAFDPEQKPLHGVLKTPTSSPASSPLVAKKPLTTTPRRRPRAMDFF) are disordered. Arg712 bears the Citrulline mark. At Thr728 the chain carries Phosphothreonine. A phosphoserine mark is found at Ser732, Ser735, and Ser736.

This sequence belongs to the RRP1 family. Interacts with the transcriptional activator E2F1. Interacts with serine/threonine-protein phosphatase PP1 subunits PPP1CB and PPP1CC but not with PPP1CA. Interacts with 60S ribosomal proteins RPL5 and RPL27, ribosomal processing protein RRP1/NNP1 and other nucleolar proteins including NOP2/NOL1 and FBL. Also interacts with nucleolar protein NPM1/B23. Interacts with splicing factor SRSF1 and with LUC7L3/CROP. Interacts with GTPase activator SIPA1. Interacts with CBX5/HP1alpha, H1-10, NCL, PARP1, TRIM28 and YBX3. In terms of assembly, (Microbial infection) Interacts with influenza A virus nucleoprotein NP and with RNA-directed RNA polymerase subunits PB1 and PB2. Citrullinated by PADI4.

Its subcellular location is the nucleus. The protein resides in the nucleolus. It is found in the nucleoplasm. The protein localises to the chromosome. Positively regulates DNA damage-induced apoptosis by acting as a transcriptional coactivator of proapoptotic target genes of the transcriptional activator E2F1. Likely to play a role in ribosome biogenesis by targeting serine/threonine protein phosphatase PP1 to the nucleolus. Involved in regulation of mRNA splicing. Inhibits SIPA1 GTPase activity. Involved in regulating expression of extracellular matrix genes. Associates with chromatin and may play a role in modulating chromatin structure. Its function is as follows. (Microbial infection) Following influenza A virus (IAV) infection, promotes viral mRNA transcription by facilitating the binding of IAV RNA-directed RNA polymerase to capped mRNA. The chain is Ribosomal RNA processing protein 1 homolog B (RRP1B) from Homo sapiens (Human).